The chain runs to 222 residues: UPF0502 protein Shewmr7_1629 (222 aa).

It belongs to the UPF0502 family.

This is UPF0502 protein Shewmr7_1629 from Shewanella sp. (strain MR-7).